The sequence spans 97 residues: ORF9b protein (97 aa).

The 9b domain maps to M8–K97. A Nuclear export signal motif is present at residues I45 to S53.

This sequence belongs to the coronavirus group 2 protein 9b family. Homodimer. Interacts with host TOMM70; the interaction occurs only with monomer.

It is found in the host cytoplasm. The protein localises to the host mitochondrion. Its function is as follows. Plays a role in inhibiting the host innate immune response by targeting the mitochondrial-associated innate immune response. Acts by binding to host TOMM70, inhibiting its binding to HSP90AB1 thereby disrupting the interferon activation pathway. The chain is ORF9b protein from Homo sapiens (Human).